The following is a 97-amino-acid chain: MKNLRHYDVIVSPIITEKSTMISEYNQVAFNVAPKATKPEIKAAVEALFSVKVKAVNTIVRKGKVKRFKGIVGRQNDVKKAIVTLASGQSIDVSTGL.

The protein belongs to the universal ribosomal protein uL23 family. Part of the 50S ribosomal subunit. Contacts protein L29, and trigger factor when it is bound to the ribosome.

In terms of biological role, one of the early assembly proteins it binds 23S rRNA. One of the proteins that surrounds the polypeptide exit tunnel on the outside of the ribosome. Forms the main docking site for trigger factor binding to the ribosome. The sequence is that of Large ribosomal subunit protein uL23 from Bartonella henselae (strain ATCC 49882 / DSM 28221 / CCUG 30454 / Houston 1) (Rochalimaea henselae).